A 295-amino-acid chain; its full sequence is Protoheme IX farnesyltransferase (295 aa).

Helical transmembrane passes span 24-43, 47-69, 94-114, 117-137, 144-164, 171-191, 216-236, 241-261, and 272-292; these read IMYL…PGSI, LALI…NMWY, SALE…AIAV, ISAI…TIWL, NIVI…AVVT, GFVL…ALSL, KYIL…ALFL, FYLG…VSIM, and MFSY…LCSI.

This sequence belongs to the UbiA prenyltransferase family. Protoheme IX farnesyltransferase subfamily.

The protein localises to the cell membrane. It carries out the reaction heme b + (2E,6E)-farnesyl diphosphate + H2O = Fe(II)-heme o + diphosphate. It functions in the pathway porphyrin-containing compound metabolism; heme O biosynthesis; heme O from protoheme: step 1/1. Its function is as follows. Converts heme B (protoheme IX) to heme O by substitution of the vinyl group on carbon 2 of heme B porphyrin ring with a hydroxyethyl farnesyl side group. The polypeptide is Protoheme IX farnesyltransferase (Wolbachia sp. subsp. Brugia malayi (strain TRS)).